We begin with the raw amino-acid sequence, 529 residues long: Ectonucleoside triphosphate diphosphohydrolase 3 (529 aa).

The Cytoplasmic portion of the chain corresponds to 1–22 (MFTVLTRQPCEQAGLKALYRTP). The helical transmembrane segment at 23-43 (TIIALVVLLVSIVVLVSITVI) threads the bilayer. At 44 to 485 (QIHKQEVLPP…PLIRLPIEPP (442 aa)) the chain is on the extracellular side. Asn81 carries an N-linked (GlcNAc...) asparagine glycan. The cysteines at positions 92 and 116 are disulfide-linked. Asn149 is a glycosylation site (N-linked (GlcNAc...) asparagine). The Proton acceptor role is filled by Glu182. 222 to 226 (GASTQ) is an ATP binding site. An N-linked (GlcNAc...) asparagine glycan is attached at Asn238. Disulfide bonds link Cys261-Cys308, Cys289-Cys334, and Cys347-Cys353. 4 N-linked (GlcNAc...) asparagine glycosylation sites follow: Asn381, Asn392, Asn402, and Asn454. Cysteines 399 and 422 form a disulfide. The chain crosses the membrane as a helical span at residues 486–506 (VFVGTLAFFTAAALLCLAFLA). The Cytoplasmic segment spans residues 507–529 (YLCSATRRKRHSEHAFDHAVDSD).

It belongs to the GDA1/CD39 NTPase family. Ca(2+) is required as a cofactor. Mg(2+) serves as cofactor. As to expression, expressed in adult brain, pancreas, spleen and prostate. Moderate or low expression is seen in most tissues. Not expressed in liver and peripheral blood leukocytes.

The protein localises to the cell membrane. The catalysed reaction is a ribonucleoside 5'-triphosphate + 2 H2O = a ribonucleoside 5'-phosphate + 2 phosphate + 2 H(+). In terms of biological role, has a threefold preference for the hydrolysis of ATP over ADP. The protein is Ectonucleoside triphosphate diphosphohydrolase 3 (ENTPD3) of Homo sapiens (Human).